Consider the following 80-residue polypeptide: Consomatin Mrc1 (80 aa).

A signal peptide spans 1 to 22 (MQTAYWVMVMMMVWITAPLSEG). Positions 23–57 (GKLNDVIRGLVPDDVTPQLILRSLISRRPSDSVVR) are excised as a propeptide. Cysteine 63 and cysteine 68 are disulfide-bonded. Tryptophan 65 is subject to D-tryptophan. A 4-hydroxyproline mark is found at proline 69, proline 70, proline 71, and proline 72. A propeptide spanning residues 74-80 (RRPNGKG) is cleaved from the precursor.

It belongs to the conotoxin C superfamily. Consomatin family. In terms of tissue distribution, expressed by the venom duct.

The protein resides in the secreted. Moderately activates human somatostatin receptors (SSTR) with a preferential activation of SSTR1 and SSTR4. In vivo, does not cause behavioral changes in mice within a few minutes of intracranial injection, but causes a progressive loss of movement thereafter. Four to five hours after injection, mice recover, even with the highest dose tested. Shows antinociception and antihyperalgesia activities in two mouse models of acute pain, most probably by acting outside the central nervous system. The polypeptide is Consomatin Mrc1 (Conus mercator (Trader cone)).